Consider the following 552-residue polypeptide: Non-structural protein NS1 (552 aa).

Belongs to the orbivirus non-structural protein NS1 family.

The sequence is that of Non-structural protein NS1 (Segment-5) from Bluetongue virus 13 (isolate USA) (BTV 13).